The chain runs to 79 residues: Sulfur carrier protein TusA (79 aa).

Cys-17 functions as the Cysteine persulfide intermediate in the catalytic mechanism.

The protein belongs to the sulfur carrier protein TusA family.

The protein resides in the cytoplasm. Functionally, sulfur carrier protein which probably makes part of a sulfur-relay system. The sequence is that of Sulfur carrier protein TusA from Mannheimia succiniciproducens (strain KCTC 0769BP / MBEL55E).